The sequence spans 261 residues: 1,6-dihydroxycyclohexa-2,4-diene-1-carboxylate dehydrogenase (261 aa).

13-37 (IVTGAAQGIGRGVALRIAQEGGCLI) provides a ligand contact to NAD(+). Ser-145 is a binding site for substrate. The Proton acceptor role is filled by Tyr-156.

It belongs to the short-chain dehydrogenases/reductases (SDR) family. As to quaternary structure, homodimer.

The enzyme catalyses (1R,6S)-1,6-dihydroxycyclohexa-2,4-diene-1-carboxylate + NAD(+) = catechol + CO2 + NADH. It functions in the pathway aromatic compound metabolism; benzoate degradation via hydroxylation; catechol from benzoate: step 2/2. Functionally, degradation of 2-hydro-1,2-dihydroxy benzoate (DHB) to catechol. The chain is 1,6-dihydroxycyclohexa-2,4-diene-1-carboxylate dehydrogenase (benD) from Acinetobacter baylyi (strain ATCC 33305 / BD413 / ADP1).